A 528-amino-acid polypeptide reads, in one-letter code: Na(+)/H(+) antiporter NhaB (528 aa).

A run of 10 helical transmembrane segments spans residues 25–47 (IISF…GWLL), 66–86 (PGGL…SQVL), 97–117 (LLLV…LFVF), 130–164 (VSLL…FYSI), 241–261 (IRMS…CFLV), 304–324 (AFIG…VGLI), 351–371 (ALPF…IIDL), 390–410 (LVVF…VFVG), 448–468 (ATPN…APLI), and 476–496 (VWMA…AIQL).

This sequence belongs to the NhaB Na(+)/H(+) (TC 2.A.34) antiporter family.

It localises to the cell inner membrane. The catalysed reaction is 2 Na(+)(in) + 3 H(+)(out) = 2 Na(+)(out) + 3 H(+)(in). In terms of biological role, na(+)/H(+) antiporter that extrudes sodium in exchange for external protons. This is Na(+)/H(+) antiporter NhaB from Shewanella halifaxensis (strain HAW-EB4).